The sequence spans 262 residues: Taurine import ATP-binding protein TauB (262 aa).

Residues 4 to 234 (VDHASVFFAA…RFAETGDARS (231 aa)) enclose the ABC transporter domain. An ATP-binding site is contributed by 39 to 46 (GASGCGKS).

It belongs to the ABC transporter superfamily. Taurine importer (TC 3.A.1.17.1) family. As to quaternary structure, the complex is composed of two ATP-binding proteins (TauB), two transmembrane proteins (TauC) and a solute-binding protein (TauA).

It localises to the cell inner membrane. The enzyme catalyses taurine(out) + ATP + H2O = taurine(in) + ADP + phosphate + H(+). Functionally, part of the ABC transporter complex TauABC involved in taurine import. Responsible for energy coupling to the transport system. This Rhizobium johnstonii (strain DSM 114642 / LMG 32736 / 3841) (Rhizobium leguminosarum bv. viciae) protein is Taurine import ATP-binding protein TauB.